The following is a 569-amino-acid chain: Paxillin-B (569 aa).

The LD motif 1 motif lies at 10–18 (DLDLLLADL). Positions 62–78 (QPQTVQTISTPAPKNHN) are enriched in polar residues. The segment at 62–103 (QPQTVQTISTPAPKNHNTTTTTASFSVSSQPAPQPPQQSQQI) is disordered. Over residues 79 to 102 (TTTTTASFSVSSQPAPQPPQQSQQ) the composition is skewed to low complexity. The short motif at 106 to 112 (LDDLDEL) is the LD motif 2 element. The interval 129–311 (TTPEEHITHA…SPKVVHGDDL (183 aa)) is disordered. A compositionally biased stretch (low complexity) spans 150 to 161 (NTSSTNSASSLS). 2 stretches are compositionally biased toward polar residues: residues 162–188 (RPNN…TTKK) and 196–206 (TLETTSGNNVY). Positions 207 to 217 (SSQPSQSQPQP) are enriched in low complexity. The LD motif 3 signature appears at 232 to 239 (LDELLKGL). Positions 258 to 272 (HQHHHQHQHHHHHNP) are enriched in basic residues. The span at 273 to 301 (NHNQTQTVTTQINIGRTNTPNNNNNNNTN) shows a compositional bias: low complexity. Positions 311–318 (LDNLLNNL) match the LD motif 4 motif. 4 consecutive LIM zinc-binding domains span residues 334 to 391 (GTCG…QELF), 393 to 452 (ARCA…TFAV), 453 to 510 (RCGG…QQAG), and 511 to 569 (SVCS…KLFA).

Belongs to the paxillin family. Expressed in the upper and lower cup of the fruiting body.

The protein localises to the cytoplasm. Its subcellular location is the cell cortex. It localises to the cell projection. It is found in the filopodium. The protein resides in the cell junction. The protein localises to the focal adhesion. Its subcellular location is the cytoskeleton. In terms of biological role, required for cell-substrate adhesion, cell sorting, slug migration, and cell differentiation. May function upstream of limB. This chain is Paxillin-B (paxB), found in Dictyostelium discoideum (Social amoeba).